The sequence spans 382 residues: MSARPITIGLVAGETSGDILGAGLIRALRGHLPEARFVGVAGPRMQAEGMEAWYDMEELAVMGIVEVVERLPRLLRIRRDLTRRFTALRPDVFVGIDAPDFTITLEGRLKRRGIRTIHYVSPSVWAWRQKRVFKIGRATDNVLAFLPFEKAFYDCYNVPCQFIGHTLADAMSLDPDKAAARQALGIAAEARCLALLPGSRQSEVAMLSADFLRAAERLYECFPGLEIVVPLVNPARRAQFEHILVAVAPALPVRLLDNQARQAMIAADAALLASGTASLECMLAKCPMVVGYRMKPLTFALARRLVKTPWVSLPNLLAGRELVKELLQEACQPEALAAALEPLLDDDDQRAALLAMFRQLHQQIRCNADEQAARAVLALINR.

This sequence belongs to the LpxB family.

The catalysed reaction is 2-N,3-O-bis[(3R)-3-hydroxytetradecanoyl]-alpha-D-glucosaminyl 1-phosphate + UDP-2-N,3-O-bis[(3R)-3-hydroxytetradecanoyl]-alpha-D-glucosamine = lipid A disaccharide (E. coli) + UDP + H(+). The enzyme catalyses a lipid X + a UDP-2-N,3-O-bis[(3R)-3-hydroxyacyl]-alpha-D-glucosamine = a lipid A disaccharide + UDP + H(+). It participates in glycolipid biosynthesis; lipid IV(A) biosynthesis; lipid IV(A) from (3R)-3-hydroxytetradecanoyl-[acyl-carrier-protein] and UDP-N-acetyl-alpha-D-glucosamine: step 5/6. Condensation of UDP-2,3-diacylglucosamine and 2,3-diacylglucosamine-1-phosphate to form lipid A disaccharide, a precursor of lipid A, a phosphorylated glycolipid that anchors the lipopolysaccharide to the outer membrane of the cell. The protein is Lipid-A-disaccharide synthase of Sodalis glossinidius (strain morsitans).